The primary structure comprises 200 residues: Large ribosomal subunit protein uL29 (200 aa).

The tract at residues 1–107 (MTIAKELKQK…KQETKKAEVK (107 aa)) is large ribosomal subunit protein uL29. Positions 92–200 (STKPESKQET…KMIKTKEKKQ (109 aa)) are disordered. Residues 93–179 (TKPESKQETK…QEVKKVEAKK (87 aa)) show a composition bias toward basic and acidic residues. Positions 108 to 200 (PKVESKPESK…KMIKTKEKKQ (93 aa)) are unknown. Over residues 186–200 (KPVKAKMIKTKEKKQ) the composition is skewed to basic residues.

The protein belongs to the universal ribosomal protein uL29 family.

The sequence is that of Large ribosomal subunit protein uL29 from Mycoplasma genitalium (strain ATCC 33530 / DSM 19775 / NCTC 10195 / G37) (Mycoplasmoides genitalium).